The chain runs to 275 residues: Phosphite import ATP-binding protein PxtA (275 aa).

The ABC transporter domain occupies 11–252; it reads LRVDRLSVVY…QLERIYAGRS (242 aa). Position 44 to 51 (44 to 51) interacts with ATP; the sequence is GLSGAGKS. The tract at residues 251–275 is disordered; sequence RSTTQPANAPAEPPVMLEPSLEMSR.

Belongs to the ABC transporter superfamily. Phosphonates importer (TC 3.A.1.9.1) family. In terms of assembly, the complex is composed of two ATP-binding proteins (PtxA), two transmembrane proteins (PtxC) and a solute-binding protein (PtxB).

The protein localises to the cell inner membrane. The catalysed reaction is phosphite(out) + ATP + H2O = phosphite(in) + ADP + phosphate + H(+). In terms of biological role, part of the ABC transporter complex PtxABC involved in phosphite import. Responsible for energy coupling to the transport system. The protein is Phosphite import ATP-binding protein PxtA (ptxA) of Stutzerimonas stutzeri (Pseudomonas stutzeri).